A 129-amino-acid polypeptide reads, in one-letter code: Large ribosomal subunit protein bL17 (129 aa).

This sequence belongs to the bacterial ribosomal protein bL17 family. As to quaternary structure, part of the 50S ribosomal subunit. Contacts protein L32.

The sequence is that of Large ribosomal subunit protein bL17 from Yersinia pseudotuberculosis serotype O:1b (strain IP 31758).